Consider the following 426-residue polypeptide: MSAVVLVGAQWGDEGKGKITDFLAEKANCVVRYQGGSNAGHTVEVSQEKFMLHLIPSGILYPETLCVIGNGVVVDMGKLIEEIDGLQKRGIDTSNLRISLRSPVVMPYHKRIDELEDRHTRIGTTKRGIGPAYADKINRIGFRMGDILTGGECFRERFKAQIEYKNRIMEEIYQEDGFDYQQMLNEVLGQAEQLKKYLADTSYLVYTAIKEGKKVLFEGAQGTLLDIDHGTYPYVTSSHPIAGGACVGTGIGPTNISKVLGVAKAYTTRVGEGPFPTELNDFQGEILRDKGQEYGTTTGRPRRCGWLDTVILRYAVRINGLTDFAITKLDVLDSFSTIKICVAYRYKGQLLTEFPNNIAILDDCEPEYIELPGWQEDISAASSIEDLPLNARAYVAKIEELTGVKAAIIAVGPKRKQTIVNSPLFT.

Residues 12–18 (GDEGKGK) and 40–42 (GHT) each bind GTP. Asp-13 serves as the catalytic Proton acceptor. 2 residues coordinate Mg(2+): Asp-13 and Gly-40. IMP-binding positions include 13-16 (DEGK), 38-41 (NAGH), Thr-125, Arg-139, Gln-221, Thr-236, and Arg-300. His-41 acts as the Proton donor in catalysis. 296–302 (TTTGRPR) is a substrate binding site. Residues Arg-302, 328–330 (KLD), and 410–412 (AVG) contribute to the GTP site.

The protein belongs to the adenylosuccinate synthetase family. As to quaternary structure, homodimer. Mg(2+) is required as a cofactor.

Its subcellular location is the cytoplasm. The enzyme catalyses IMP + L-aspartate + GTP = N(6)-(1,2-dicarboxyethyl)-AMP + GDP + phosphate + 2 H(+). It participates in purine metabolism; AMP biosynthesis via de novo pathway; AMP from IMP: step 1/2. Functionally, plays an important role in the de novo pathway of purine nucleotide biosynthesis. Catalyzes the first committed step in the biosynthesis of AMP from IMP. This is Adenylosuccinate synthetase from Syntrophomonas wolfei subsp. wolfei (strain DSM 2245B / Goettingen).